The following is a 201-amino-acid chain: Recombination protein RecR (201 aa).

The segment at 57 to 72 adopts a C4-type zinc-finger fold; the sequence is CADCRTFTEQDVCNIC. The region spanning 81–176 is the Toprim domain; it reads GQICVVESPA…EASRIAHGVP (96 aa).

This sequence belongs to the RecR family.

In terms of biological role, may play a role in DNA repair. It seems to be involved in an RecBC-independent recombinational process of DNA repair. It may act with RecF and RecO. The chain is Recombination protein RecR from Salmonella choleraesuis (strain SC-B67).